The chain runs to 353 residues: Probable cytochrome c oxidase subunit 2 (353 aa).

Positions 1 to 42 are cleaved as a signal peptide; sequence MTARELVCSQRVGQGLSRRLRPLVLAVTLGVLVVTLSGCSWS. 2 consecutive transmembrane segments (helical) span residues 63 to 83 and 110 to 130; these read LWIG…GLIF and LVLT…TVIV. Cu cation contacts are provided by His246, Cys287, Cys291, and His295.

Belongs to the cytochrome c oxidase subunit 2 family. Requires Cu cation as cofactor. The cofactor is heme.

It is found in the cell membrane. The enzyme catalyses 4 Fe(II)-[cytochrome c] + O2 + 8 H(+)(in) = 4 Fe(III)-[cytochrome c] + 2 H2O + 4 H(+)(out). Its function is as follows. Subunits I and II form the functional core of the enzyme complex. Electrons originating in cytochrome c are transferred via heme a and Cu(A) to the binuclear center formed by heme a3 and Cu(B). In Mycobacterium leprae (strain TN), this protein is Probable cytochrome c oxidase subunit 2 (ctaC).